A 337-amino-acid polypeptide reads, in one-letter code: 5-formaminoimidazole-4-carboxamide-1-(beta)-D-ribofuranosyl 5'-monophosphate synthetase (337 aa).

His-9 and Ser-73 together coordinate 5-amino-1-(5-phospho-beta-D-ribosyl)imidazole-4-carboxamide. Positions 94–324 constitute an ATP-grasp domain; the sequence is KKIFEWEADQ…IGRRIAREIR (231 aa). Residues 124 to 184 and Glu-206 each bind ATP; that span reads PEDV…VPMY. Asn-234 serves as a coordination point for 5-amino-1-(5-phospho-beta-D-ribosyl)imidazole-4-carboxamide. Mg(2+) is bound by residues Glu-273 and Glu-286.

It belongs to the phosphohexose mutase family. The cofactor is Mg(2+). Mn(2+) is required as a cofactor.

The catalysed reaction is 5-amino-1-(5-phospho-beta-D-ribosyl)imidazole-4-carboxamide + formate + ATP = 5-formamido-1-(5-phospho-D-ribosyl)imidazole-4-carboxamide + ADP + phosphate. The protein operates within purine metabolism; IMP biosynthesis via de novo pathway; 5-formamido-1-(5-phospho-D-ribosyl)imidazole-4-carboxamide from 5-amino-1-(5-phospho-D-ribosyl)imidazole-4-carboxamide (formate route): step 1/1. In terms of biological role, catalyzes the ATP- and formate-dependent formylation of 5-aminoimidazole-4-carboxamide-1-beta-d-ribofuranosyl 5'-monophosphate (AICAR) to 5-formaminoimidazole-4-carboxamide-1-beta-d-ribofuranosyl 5'-monophosphate (FAICAR) in the absence of folates. This chain is 5-formaminoimidazole-4-carboxamide-1-(beta)-D-ribofuranosyl 5'-monophosphate synthetase, found in Saccharolobus solfataricus (strain ATCC 35092 / DSM 1617 / JCM 11322 / P2) (Sulfolobus solfataricus).